Here is a 310-residue protein sequence, read N- to C-terminus: p-hydroxybenzoic acid efflux pump subunit AaeA (310 aa).

The chain crosses the membrane as a helical span at residues 12–32; it reads AITVVLVILAFIAIFNAWVYY.

Belongs to the membrane fusion protein (MFP) (TC 8.A.1) family.

The protein resides in the cell inner membrane. Functionally, forms an efflux pump with AaeB. This Escherichia coli O127:H6 (strain E2348/69 / EPEC) protein is p-hydroxybenzoic acid efflux pump subunit AaeA.